Consider the following 162-residue polypeptide: Peptide deformylase-like (162 aa).

It belongs to the polypeptide deformylase family.

This Staphylococcus epidermidis (strain ATCC 35984 / DSM 28319 / BCRC 17069 / CCUG 31568 / BM 3577 / RP62A) protein is Peptide deformylase-like.